A 150-amino-acid chain; its full sequence is 3-hydroxyacyl-[acyl-carrier-protein] dehydratase FabZ (150 aa).

H51 is an active-site residue.

It belongs to the thioester dehydratase family. FabZ subfamily.

It is found in the cytoplasm. The catalysed reaction is a (3R)-hydroxyacyl-[ACP] = a (2E)-enoyl-[ACP] + H2O. In terms of biological role, involved in unsaturated fatty acids biosynthesis. Catalyzes the dehydration of short chain beta-hydroxyacyl-ACPs and long chain saturated and unsaturated beta-hydroxyacyl-ACPs. In Rubrobacter xylanophilus (strain DSM 9941 / JCM 11954 / NBRC 16129 / PRD-1), this protein is 3-hydroxyacyl-[acyl-carrier-protein] dehydratase FabZ.